Here is a 260-residue protein sequence, read N- to C-terminus: CD40 ligand (260 aa).

The Cytoplasmic portion of the chain corresponds to 1–22 (MIETYSQTAPRSVAPGPPVSMK). A helical; Signal-anchor for type II membrane protein membrane pass occupies residues 23-46 (IFMYLLTVFLITQMIGSALFAVYL). Residues 47–260 (HRRLDKIEDE…GFTSFGLLKL (214 aa)) are Extracellular-facing. A THD domain is found at 121–260 (VAAHVISEAS…GFTSFGLLKL (140 aa)). An intrachain disulfide couples Cys-177 to Cys-217. The N-linked (GlcNAc...) asparagine glycan is linked to Asn-239.

It belongs to the tumor necrosis factor family. Homotrimer. Interacts with CD28. CD40 ligand, soluble form: Exists as either a monomer or a homotrimer. Forms a ternary complex between CD40 and integrins for CD40-CD40LG signaling. The soluble form derives from the membrane form by proteolytic processing.

The protein localises to the cell membrane. Its subcellular location is the cell surface. It localises to the secreted. In terms of biological role, cytokine that acts as a ligand to CD40/TNFRSF5. Costimulates T-cell proliferation and cytokine production. Its cross-linking on T-cells generates a costimulatory signal which enhances the production of IL4 and IL10 in conjunction with the TCR/CD3 ligation and CD28 costimulation. Induces the activation of NF-kappa-B. Induces the activation of kinases MAPK8 and PAK2 in T-cells. Mediates B-cell proliferation in the absence of co-stimulus as well as IgE production in the presence of IL4. Involved in immunoglobulin class switching. Acts as a ligand for integrins, specifically ITGA5:ITGB1 and ITGAV:ITGB3; both integrins and the CD40 receptor are required for activation of CD40-CD40LG signaling, which have cell-type dependent effects, such as B-cell activation, NF-kappa-B signaling and anti-apoptotic signaling. In Felis catus (Cat), this protein is CD40 ligand (CD40LG).